The sequence spans 119 residues: Beta-2-microglobulin (119 aa).

An N-terminal signal peptide occupies residues 1–20 (MACSVVVALLALLSLSGLEA). One can recognise an Ig-like C1-type domain in the interval 25-114 (PKIQVYSRHP…VTFSTPKTVK (90 aa)). Cysteine 45 and cysteine 100 are oxidised to a cystine.

Belongs to the beta-2-microglobulin family. Heterodimer of an alpha chain and a beta chain. Beta-2-microglobulin is the beta-chain of major histocompatibility complex class I molecules.

It localises to the secreted. Functionally, component of the class I major histocompatibility complex (MHC). Involved in the presentation of peptide antigens to the immune system. This chain is Beta-2-microglobulin (B2M), found in Mico emiliae (Emilia's marmoset).